A 438-amino-acid chain; its full sequence is Enolase (438 aa).

Gln164 serves as a coordination point for (2R)-2-phosphoglycerate. Glu206 acts as the Proton donor in catalysis. The Mg(2+) site is built by Asp243, Glu289, and Asp316. Lys341, Arg370, Ser371, and Lys392 together coordinate (2R)-2-phosphoglycerate. Lys341 serves as the catalytic Proton acceptor.

This sequence belongs to the enolase family. Requires Mg(2+) as cofactor.

It is found in the cytoplasm. The protein resides in the secreted. Its subcellular location is the cell surface. The catalysed reaction is (2R)-2-phosphoglycerate = phosphoenolpyruvate + H2O. Its pathway is carbohydrate degradation; glycolysis; pyruvate from D-glyceraldehyde 3-phosphate: step 4/5. In terms of biological role, catalyzes the reversible conversion of 2-phosphoglycerate (2-PG) into phosphoenolpyruvate (PEP). It is essential for the degradation of carbohydrates via glycolysis. The protein is Enolase of Borrelia garinii subsp. bavariensis (strain ATCC BAA-2496 / DSM 23469 / PBi) (Borreliella bavariensis).